A 242-amino-acid chain; its full sequence is Mannosyl-3-phosphoglycerate phosphatase (242 aa).

Aspartate 8 functions as the Nucleophile in the catalytic mechanism. Aspartate 8, aspartate 10, serine 169, and aspartate 204 together coordinate Mg(2+).

Belongs to the HAD-like hydrolase superfamily. MPGP family. It depends on Mg(2+) as a cofactor.

Its subcellular location is the cytoplasm. The catalysed reaction is 2-O-(alpha-D-mannosyl)-3-phosphoglycerate + H2O = (2R)-2-O-(alpha-D-mannosyl)-glycerate + phosphate. It participates in carbohydrate biosynthesis; 2-(alpha-D-mannosyl)-D-glycerate biosynthesis; 2-(alpha-D-mannosyl)-D-glycerate from GDP-alpha-D-mannose (MPG route): step 2/2. Hydrolyzes mannosyl-3-phosphoglycerate (MPG) to form the osmolyte mannosylglycerate (MG). This Pyrococcus furiosus (strain ATCC 43587 / DSM 3638 / JCM 8422 / Vc1) protein is Mannosyl-3-phosphoglycerate phosphatase.